The following is a 441-amino-acid chain: GTPase Der (441 aa).

EngA-type G domains lie at 4 to 169 and 178 to 353; these read PVVA…PEDI and IKVA…DQAA. GTP-binding positions include 10 to 17, 57 to 61, 120 to 123, 184 to 191, 231 to 235, and 296 to 299; these read GRPNVGKS, DTGGI, NKVD, GKPNAGKS, DTAGI, and NKWD. Positions 354 to 438 constitute a KH-like domain; the sequence is FRISTGMLND…PIRFIHRQRE (85 aa).

It belongs to the TRAFAC class TrmE-Era-EngA-EngB-Septin-like GTPase superfamily. EngA (Der) GTPase family. As to quaternary structure, associates with the 50S ribosomal subunit.

GTPase that plays an essential role in the late steps of ribosome biogenesis. In Ruminiclostridium cellulolyticum (strain ATCC 35319 / DSM 5812 / JCM 6584 / H10) (Clostridium cellulolyticum), this protein is GTPase Der.